The sequence spans 386 residues: Enamidase (386 aa).

Positions 67, 69, and 164 each coordinate Zn(2+). The Fe cation site is built by Glu-164, His-193, and His-220. Asp-276 is a Zn(2+) binding site.

As to quaternary structure, homotetramer. Dimer of dimers. It depends on Fe cation as a cofactor. Zn(2+) is required as a cofactor.

It catalyses the reaction 1,4,5,6-tetrahydro-6-oxonicotinate + 2 H2O = 2-formylglutarate + NH4(+). Its pathway is cofactor degradation; nicotinate degradation; propanoate and pyruvate from 6-hydroxynicotinate: step 2/8. Functionally, decyclization of 6-oxo-1,4,5,6-tetrahydronicotinate to form 2-(enamine)glutarate, followed by hydrolysis to form (S)-2-formylglutarate. The chain is Enamidase from Eubacterium barkeri (Clostridium barkeri).